We begin with the raw amino-acid sequence, 210 residues long: Thiamine-phosphate synthase (210 aa).

4-amino-2-methyl-5-(diphosphooxymethyl)pyrimidine is bound by residues 34-38 (QLRHK) and N66. D67 and D86 together coordinate Mg(2+). S105 contributes to the 4-amino-2-methyl-5-(diphosphooxymethyl)pyrimidine binding site. 131-133 (TSS) is a binding site for 2-[(2R,5Z)-2-carboxy-4-methylthiazol-5(2H)-ylidene]ethyl phosphate. K134 contacts 4-amino-2-methyl-5-(diphosphooxymethyl)pyrimidine. G162 contacts 2-[(2R,5Z)-2-carboxy-4-methylthiazol-5(2H)-ylidene]ethyl phosphate.

It belongs to the thiamine-phosphate synthase family. The cofactor is Mg(2+).

The enzyme catalyses 2-[(2R,5Z)-2-carboxy-4-methylthiazol-5(2H)-ylidene]ethyl phosphate + 4-amino-2-methyl-5-(diphosphooxymethyl)pyrimidine + 2 H(+) = thiamine phosphate + CO2 + diphosphate. It carries out the reaction 2-(2-carboxy-4-methylthiazol-5-yl)ethyl phosphate + 4-amino-2-methyl-5-(diphosphooxymethyl)pyrimidine + 2 H(+) = thiamine phosphate + CO2 + diphosphate. The catalysed reaction is 4-methyl-5-(2-phosphooxyethyl)-thiazole + 4-amino-2-methyl-5-(diphosphooxymethyl)pyrimidine + H(+) = thiamine phosphate + diphosphate. Its pathway is cofactor biosynthesis; thiamine diphosphate biosynthesis; thiamine phosphate from 4-amino-2-methyl-5-diphosphomethylpyrimidine and 4-methyl-5-(2-phosphoethyl)-thiazole: step 1/1. In terms of biological role, condenses 4-methyl-5-(beta-hydroxyethyl)thiazole monophosphate (THZ-P) and 2-methyl-4-amino-5-hydroxymethyl pyrimidine pyrophosphate (HMP-PP) to form thiamine monophosphate (TMP). This Chlorobium limicola (strain DSM 245 / NBRC 103803 / 6330) protein is Thiamine-phosphate synthase.